We begin with the raw amino-acid sequence, 745 residues long: Inhibitor of nuclear factor kappa-B kinase subunit alpha (745 aa).

The Protein kinase domain occupies 15–300 (WEMRERLGTG…IDLTLKQPRC (286 aa)). ATP contacts are provided by residues 21–29 (LGTGGFGNV) and lysine 44. Threonine 23 is subject to Phosphothreonine; by PKB/AKT1 and SGK1. Aspartate 144 (proton acceptor) is an active-site residue. Serine 176 carries the phosphoserine; by MAP3K14 modification. Residue serine 180 is modified to Phosphoserine; by SGK1. A leucine-zipper region spans residues 455–476 (LLRYNANLTKMKNTLISASQQL). Residues 738–743 (LDWSWL) are NEMO-binding.

This sequence belongs to the protein kinase superfamily. Ser/Thr protein kinase family. I-kappa-B kinase subfamily. Component of the I-kappa-B-kinase (IKK) core complex consisting of CHUK, IKBKB and IKBKG; probably four alpha/CHUK-beta/IKBKB dimers are associated with four gamma/IKBKG subunits. The IKK core complex seems to associate with regulatory or adapter proteins to form a IKK-signalosome holo-complex. The IKK complex associates with TERF2IP/RAP1, leading to promote IKK-mediated phosphorylation of RELA/p65. Part of a complex composed of NCOA2, NCOA3, CHUK/IKKA, IKBKB, IKBKG and CREBBP. Part of a 70-90 kDa complex at least consisting of CHUK/IKKA, IKBKB, NFKBIA, RELA, ELP1 and MAP3K14. Directly interacts with TRPC4AP. May interact with TRAF2. Interacts with NALP2. May interact with MAVS/IPS1. Interacts with ARRB1 and ARRB2. Interacts with NLRC5; prevents CHUK phosphorylation and kinase activity. Interacts with PIAS1; this interaction induces PIAS1 phosphorylation. Interacts with ZNF268 isoform 2; the interaction is further increased in a TNF-alpha-dependent manner. Interacts with LRRC14. Interacts with SASH1. Directly interacts with DDX3X after the physiological activation of the TLR7 and TLR8 pathways; this interaction enhances CHUK autophosphorylation. Post-translationally, ubiquitinated by TRIM56 via 'Lys-63'-linked ubiquitination, promoting activation of CHUK/IKKA. In terms of processing, phosphorylated by MAP3K14/NIK, AKT and to a lesser extent by MEKK1, and dephosphorylated by PP2A. Autophosphorylated. In terms of tissue distribution, ubiquitous only for isoform 1, isoforms 2 and 3 are expressed predominantly in brain and T-lymphocytes.

Its subcellular location is the cytoplasm. It is found in the nucleus. It catalyses the reaction L-seryl-[I-kappa-B protein] + ATP = O-phospho-L-seryl-[I-kappa-B protein] + ADP + H(+). Activated when phosphorylated and inactivated when dephosphorylated. In terms of biological role, serine kinase that plays an essential role in the NF-kappa-B signaling pathway which is activated by multiple stimuli such as inflammatory cytokines, bacterial or viral products, DNA damages or other cellular stresses. Acts as a part of the canonical IKK complex in the conventional pathway of NF-kappa-B activation and phosphorylates inhibitors of NF-kappa-B on serine residues. These modifications allow polyubiquitination of the inhibitors and subsequent degradation by the proteasome. In turn, free NF-kappa-B is translocated into the nucleus and activates the transcription of hundreds of genes involved in immune response, growth control, or protection against apoptosis. Negatively regulates the pathway by phosphorylating the scaffold protein TAXBP1 and thus promoting the assembly of the A20/TNFAIP3 ubiquitin-editing complex (composed of A20/TNFAIP3, TAX1BP1, and the E3 ligases ITCH and RNF11). Therefore, CHUK plays a key role in the negative feedback of NF-kappa-B canonical signaling to limit inflammatory gene activation. As part of the non-canonical pathway of NF-kappa-B activation, the MAP3K14-activated CHUK/IKKA homodimer phosphorylates NFKB2/p100 associated with RelB, inducing its proteolytic processing to NFKB2/p52 and the formation of NF-kappa-B RelB-p52 complexes. In turn, these complexes regulate genes encoding molecules involved in B-cell survival and lymphoid organogenesis. Also participates in the negative feedback of the non-canonical NF-kappa-B signaling pathway by phosphorylating and destabilizing MAP3K14/NIK. Within the nucleus, phosphorylates CREBBP and consequently increases both its transcriptional and histone acetyltransferase activities. Modulates chromatin accessibility at NF-kappa-B-responsive promoters by phosphorylating histones H3 at 'Ser-10' that are subsequently acetylated at 'Lys-14' by CREBBP. Additionally, phosphorylates the CREBBP-interacting protein NCOA3. Also phosphorylates FOXO3 and may regulate this pro-apoptotic transcription factor. Phosphorylates RIPK1 at 'Ser-25' which represses its kinase activity and consequently prevents TNF-mediated RIPK1-dependent cell death. Phosphorylates AMBRA1 following mitophagy induction, promoting AMBRA1 interaction with ATG8 family proteins and its mitophagic activity. The chain is Inhibitor of nuclear factor kappa-B kinase subunit alpha (Chuk) from Mus musculus (Mouse).